The primary structure comprises 1506 residues: DDB1- and CUL4-associated factor 1 (1506 aa).

The interval 141 to 499 is protein kinase-like; that stretch reads QPLRTYSTGL…STLEILNLED (359 aa). Ser-202 and Ser-254 each carry phosphoserine. Positions 241 to 275 are disordered; sequence RLDSSHKTSSRVNSATKPEEGGLKKNKSAKHGDRE. Residues 561–592 form the Chromo domain; it reads SYTHEQIVEMMEFLIEYGPAQLYWEPAEVFLK. Residue Lys-700 is modified to N6-acetyllysine. Ser-827 bears the Phosphoserine mark. A LisH domain is found at 845–877; that stretch reads PEKELLLLIRNHLISKGLGETATVLTREADLPM. A Phosphothreonine modification is found at Thr-887. Residues Ser-894 and Ser-897 each carry the phosphoserine modification. Disordered regions lie at residues 916–946 and 977–999; these read ATVG…GPSY and KSDH…HLPS. A compositionally biased stretch (pro residues) spans 924–943; the sequence is SAPPAHPPPRPPQGSLPLPG. Residues Ser-978 and Ser-999 each carry the phosphoserine modification. WD repeat units follow at residues 1090–1129, 1132–1173, 1175–1212, 1214–1246, and 1247–1289; these read EDES…EEAS, CHNS…DMKH, FTED…KLLT, FNPD…WDVR, and SAQA…LLHT. Residues 1090–1289 form a WD repeat-like region region; it reads EDESGFTCCA…DLRTFHLLHT (200 aa). 2 consecutive short sequence motifs (DWD box) follow at residues 1241-1248 and 1277-1284; these read VLWDVRSA and EIWDLRTF. Residue Ser-1327 is modified to Phosphoserine. The disordered stretch occupies residues 1392–1506; the sequence is RLAEDEDEEE…EDDIILSLNE (115 aa). 2 stretches are compositionally biased toward acidic residues: residues 1395 to 1482 and 1489 to 1500; these read EDED…EEVE and DSSDNSDLEDDI. Residues 1417 to 1506 form an interaction with NF2 region; that stretch reads DDDTDDLDEL…EDDIILSLNE (90 aa).

Belongs to the VPRBP/DCAF1 family. In terms of assembly, component of the DCX (DDB1-CUL4-X-box) E3 ubiquitin-protein ligase complex, named CUL4A-RBX1-DDB1-DCAF1/VPRBP complex. Interacts with DDB1; the interaction is direct. Also forms a ternary complex with DDA1 and DDB1. Interacts with NF2 (via FERM domain). Component of the EDVP complex, a E3 ligase complex containing DYRK2, EDD/UBR5, DDB1 and DCAF1. Interacts with DYRK2; the interaction is direct. Interacts with RAG1; the interaction is direct. Interacts with LLGL1 and LLGL2. Interacts with histone H3. Interacts with ESR1 and LATS1; probably recruited by LATS1 to promote ESR1 ubiquitination and ubiquitin-mediated proteasomal degradation. Directly interacts with TET1, TET2 and TET3 (via C-terminus). Interacts with CEP78; promoting DCAF1 localization to centrosomes. As to expression, widely expressed. Expressed in oocytes and zygotes (at protein level).

The protein resides in the cytoplasm. Its subcellular location is the nucleus. The protein localises to the cytoskeleton. It localises to the microtubule organizing center. It is found in the centrosome. It catalyses the reaction L-seryl-[protein] + ATP = O-phospho-L-seryl-[protein] + ADP + H(+). The catalysed reaction is L-threonyl-[protein] + ATP = O-phospho-L-threonyl-[protein] + ADP + H(+). Its pathway is protein modification; protein ubiquitination. Its function is as follows. Acts both as a substrate recognition component of E3 ubiquitin-protein ligase complexes and as an atypical serine/threonine-protein kinase, playing key roles in various processes such as cell cycle, telomerase regulation and histone modification. Probable substrate-specific adapter of a DCX (DDB1-CUL4-X-box) E3 ubiquitin-protein ligase complex, named CUL4A-RBX1-DDB1-DCAF1/VPRBP complex, which mediates ubiquitination and proteasome-dependent degradation of proteins such as NF2. Involved in the turnover of methylated proteins: recognizes and binds methylated proteins via its chromo domain, leading to ubiquitination of target proteins by the RBX1-DDB1-DCAF1/VPRBP complex. The CUL4A-RBX1-DDB1-DCAF1/VPRBP complex is also involved in B-cell development: DCAF1 is recruited by RAG1 to ubiquitinate proteins, leading to limit error-prone repair during V(D)J recombination. Also part of the EDVP complex, an E3 ligase complex that mediates ubiquitination of proteins such as TERT, leading to TERT degradation and telomerase inhibition. The EDVP complex also mediates ubiquitination and degradation of CCP110. Also acts as an atypical serine/threonine-protein kinase that specifically mediates phosphorylation of 'Thr-120' of histone H2A (H2AT120ph) in a nucleosomal context, thereby repressing transcription. H2AT120ph is present in the regulatory region of many tumor suppresor genes, down-regulates their transcription and is present at high level in a number of tumors. Involved in JNK-mediated apoptosis during cell competition process via its interaction with LLGL1 and LLGL2. By acting on TET dioxygenses, essential for oocyte maintenance at the primordial follicle stage, hence essential for female fertility. The protein is DDB1- and CUL4-associated factor 1 of Mus musculus (Mouse).